The following is a 177-amino-acid chain: Large ribosomal subunit protein uL6 (177 aa).

This sequence belongs to the universal ribosomal protein uL6 family. As to quaternary structure, part of the 50S ribosomal subunit.

In terms of biological role, this protein binds to the 23S rRNA, and is important in its secondary structure. It is located near the subunit interface in the base of the L7/L12 stalk, and near the tRNA binding site of the peptidyltransferase center. This Yersinia pseudotuberculosis serotype O:1b (strain IP 31758) protein is Large ribosomal subunit protein uL6.